The chain runs to 152 residues: Transcriptional regulator MraZ (152 aa).

2 consecutive SpoVT-AbrB domains span residues 5-52 and 81-124; these read ASSL…PLAQ and ATEY…DEAR.

The protein belongs to the MraZ family. Forms oligomers.

It is found in the cytoplasm. Its subcellular location is the nucleoid. This Pseudoalteromonas translucida (strain TAC 125) protein is Transcriptional regulator MraZ.